Reading from the N-terminus, the 317-residue chain is MLSFLAALSLPLALVNAYANPGTCNGNCWAHDPGLWKHDDGRYFLFSTGNGIHISSAPSLQGPWTEVGYALPDGSSINHDGNKNLWAPDVHKGDDGKYYMYYSVSTLGSQNSVIGVASSTTMEPGSWTDHGSTGLSSDGSQGYNTIDANWIKIGDQQVLNFGSYWQGLYQIDLAGPLKIGTAAPVNIAYNATGQHAIEASFLYQQNGFYYLFFSSGKANGYDTSFPAQGEEYRINVCRSSTGRGDFVDKNGVSCLQSGGTTVLASHDNVYGPGGQGVLEDNGAVLYYHYAPRNGDLSVSSYQFGWNRLNWVDGWPTV.

The N-terminal stretch at 1-17 (MLSFLAALSLPLALVNA) is a signal peptide. Residue Asp-32 is the Proton acceptor of the active site. Asn-190 carries N-linked (GlcNAc...) asparagine glycosylation. Glu-198 functions as the Proton donor in the catalytic mechanism.

Belongs to the glycosyl hydrolase 43 family.

The protein localises to the secreted. The catalysed reaction is Endohydrolysis of (1-&gt;5)-alpha-arabinofuranosidic linkages in (1-&gt;5)-arabinans.. It functions in the pathway glycan metabolism; L-arabinan degradation. In terms of biological role, endo-1,5-alpha-L-arabinanase involved in degradation of pectin. Its preferred substrate is linear 1,5-alpha-L-arabinan. The chain is Probable arabinan endo-1,5-alpha-L-arabinosidase C (abnC) from Aspergillus flavus (strain ATCC 200026 / FGSC A1120 / IAM 13836 / NRRL 3357 / JCM 12722 / SRRC 167).